Consider the following 791-residue polypeptide: Genome polyprotein (791 aa).

An interaction with host EXOC1 region spans residues 1 to 15 (MNNQRKKTGRPSFNM). At 1–101 (MNNQRKKTGR…LNIMNRRKRS (101 aa)) the chain is on the cytoplasmic side. Residues 37 to 72 (LLSGQGPMKLVMAFIAFLRFLAIPPTAGILARWSSF) form a hydrophobic; homodimerization of capsid protein C region. Residues 101–114 (SVTMLLMLLPTALA) constitute a propeptide, ER anchor for the capsid protein C, removed in mature form by serine protease NS3. A helical membrane pass occupies residues 102 to 119 (VTMLLMLLPTALAFHLTT). The Extracellular segment spans residues 120–242 (RGGEPTLIVS…QIQKVETWAL (123 aa)). N183 is a glycosylation site (N-linked (GlcNAc...) asparagine; by host). Residues 243–260 (RHPGFTVIGLFLAHAIGT) traverse the membrane as a helical segment. A topological domain (cytoplasmic) is located at residue S261. The helical transmembrane segment at 262-280 (ITQKGIIFILLMLVTPSMA) threads the bilayer. Over 281-725 (MRCVGIGNRD…IHQIFGTAYG (445 aa)) the chain is Extracellular. Intrachain disulfides connect C283–C310, C340–C401, C354–C385, and C372–C396. N347 carries N-linked (GlcNAc...) asparagine; by host glycosylation. A fusion peptide region spans residues 378-391 (DRGWGNGCGLFGKG). N433 is a glycosylation site (N-linked (GlcNAc...) asparagine; by host). Disulfide bonds link C465–C565 and C582–C613. Residues 726–746 (ILFSGVSWTMKIGIGILLTWL) traverse the membrane as a helical segment. The Cytoplasmic segment spans residues 747–752 (GLNSRS). The chain crosses the membrane as a helical span at residues 753-775 (TSLSMTCIAVGMVTLYLGVMVQA). Over 776–791 (DSGCVINWKGKELKCG) the chain is Extracellular. C779 and C790 form a disulfide bridge.

Homodimer. Interacts (via N-terminus) with host EXOC1 (via C-terminus); this interaction results in EXOC1 degradation through the proteasome degradation pathway. In terms of assembly, forms heterodimers with envelope protein E in the endoplasmic reticulum and Golgi. As to quaternary structure, homodimer; in the endoplasmic reticulum and Golgi. Interacts with protein prM. Interacts with non-structural protein 1. Homodimer; Homohexamer when secreted. Interacts with envelope protein E. In terms of processing, specific enzymatic cleavages in vivo yield mature proteins. Cleavages in the lumen of endoplasmic reticulum are performed by host signal peptidase, wereas cleavages in the cytoplasmic side are performed by serine protease NS3. Signal cleavage at the 2K-4B site requires a prior NS3 protease-mediated cleavage at the 4A-2K site. Post-translationally, N-glycosylated. N-glycosylated. The excreted form is glycosylated and this is required for efficient secretion of the protein from infected cells.

The protein resides in the virion. It localises to the host nucleus. Its subcellular location is the host cytoplasm. It is found in the host perinuclear region. The protein localises to the secreted. The protein resides in the virion membrane. It localises to the host endoplasmic reticulum membrane. Plays a role in virus budding by binding to the cell membrane and gathering the viral RNA into a nucleocapsid that forms the core of a mature virus particle. During virus entry, may induce genome penetration into the host cytoplasm after hemifusion induced by the surface proteins. Can migrate to the cell nucleus where it modulates host functions. Overcomes the anti-viral effects of host EXOC1 by sequestering and degrading the latter through the proteasome degradation pathway. Functionally, inhibits RNA silencing by interfering with host Dicer. In terms of biological role, prevents premature fusion activity of envelope proteins in trans-Golgi by binding to envelope protein E at pH6.0. After virion release in extracellular space, gets dissociated from E dimers. Its function is as follows. Acts as a chaperone for envelope protein E during intracellular virion assembly by masking and inactivating envelope protein E fusion peptide. prM is the only viral peptide matured by host furin in the trans-Golgi network probably to avoid catastrophic activation of the viral fusion activity in acidic GolGi compartment prior to virion release. prM-E cleavage is inefficient, and many virions are only partially matured. These uncleaved prM would play a role in immune evasion. May play a role in virus budding. Exerts cytotoxic effects by activating a mitochondrial apoptotic pathway through M ectodomain. May display a viroporin activity. Functionally, binds to host cell surface receptor and mediates fusion between viral and cellular membranes. Envelope protein is synthesized in the endoplasmic reticulum in the form of heterodimer with protein prM. They play a role in virion budding in the ER, and the newly formed immature particle is covered with 60 spikes composed of heterodimer between precursor prM and envelope protein E. The virion is transported to the Golgi apparatus where the low pH causes dissociation of PrM-E heterodimers and formation of E homodimers. prM-E cleavage is inefficient, and many virions are only partially matured. These uncleaved prM would play a role in immune evasion. In terms of biological role, involved in immune evasion, pathogenesis and viral replication. Once cleaved off the polyprotein, is targeted to three destinations: the viral replication cycle, the plasma membrane and the extracellular compartment. Essential for viral replication. Required for formation of the replication complex and recruitment of other non-structural proteins to the ER-derived membrane structures. Excreted as a hexameric lipoparticle that plays a role against host immune response. Antagonizing the complement function. Binds to the host macrophages and dendritic cells. Inhibits signal transduction originating from Toll-like receptor 3 (TLR3). Its function is as follows. Disrupts the host endothelial glycocalyx layer of host pulmonary microvascular endothelial cells, inducing degradation of sialic acid and shedding of heparan sulfate proteoglycans. NS1 induces expression of sialidases, heparanase, and activates cathepsin L, which activates heparanase via enzymatic cleavage. These effects are probably linked to the endothelial hyperpermeability observed in severe dengue disease. This Dengue virus type 1 (strain Jamaica/CV1636/1977) (DENV-1) protein is Genome polyprotein.